The sequence spans 29 residues: MNEAKSLFTTFLILAFLLFLLYAFYEAAF.

A helical transmembrane segment spans residues 7–27 (LFTTFLILAFLLFLLYAFYEA).

As to quaternary structure, interacts with SERCA. As to expression, strongly expressed in embryonic and larval somatic muscles and postembryonic heart.

The protein localises to the sarcoplasmic reticulum membrane. Its function is as follows. Plays an essential role in the regulation of calcium transport at the sarcoplasmic reticulum (SR), which is secondarily required for regular muscle contraction. This chain is Sarcolamban B, found in Drosophila melanogaster (Fruit fly).